The following is a 486-amino-acid chain: Elastin-binding protein EbpS (486 aa).

The span at Met-1–Thr-40 shows a compositional bias: basic and acidic residues. Positions Met-1–Lys-314 are disordered. Residues Ser-2–Lys-204 are Extracellular-facing. Residues Gln-14–Glu-34 form an elastin-binding region. Polar residues predominate over residues Thr-64–Ala-85. Composition is skewed to basic and acidic residues over residues Glu-103 to Tyr-118 and Asp-126 to Thr-149. Residues Glu-150–Pro-166 are compositionally biased toward polar residues. Positions Ser-180–His-199 are enriched in basic and acidic residues. Composition is skewed to low complexity over residues Lys-204–Ser-225 and Asp-233–Ser-246. The helical transmembrane segment at Gly-205–Ser-225 threads the bilayer. At Lys-226–Lys-319 the chain is on the cytoplasmic side. Residues Thr-247 to His-259 are compositionally biased toward basic and acidic residues. Positions Gly-278–Ser-297 are enriched in low complexity. Positions Asn-299–Lys-314 are enriched in basic and acidic residues. Residues Val-320–Met-340 form a helical membrane-spanning segment. Over Ala-341–Pro-486 the chain is Extracellular. Residues Glu-351–Thr-440 are disordered. Positions Asn-361–Glu-398 are enriched in basic and acidic residues. The span at Gln-403 to Gln-431 shows a compositional bias: low complexity. In terms of domain architecture, LysM spans Gln-437 to Ile-485.

The protein resides in the cell membrane. In terms of biological role, promotes binding of soluble elastin peptides and tropoelastin to S.aureus cells although it is not able to promote bacterial adherence to immobilized elastin and, therefore, is not a microbial surface component recognizing adhesive matrix molecule (MSCRAMM). This Staphylococcus aureus (strain Mu50 / ATCC 700699) protein is Elastin-binding protein EbpS (ebpS).